Here is a 405-residue protein sequence, read N- to C-terminus: L-rhamnonate dehydratase (405 aa).

The substrate site is built by H33 and R59. 3 residues coordinate Mg(2+): D226, E252, and E280. The active-site Proton acceptor is the H329. Residue E349 coordinates substrate.

The protein belongs to the mandelate racemase/muconate lactonizing enzyme family. RhamD subfamily. In terms of assembly, homooctamer; tetramer of dimers. It depends on Mg(2+) as a cofactor.

The catalysed reaction is L-rhamnonate = 2-dehydro-3-deoxy-L-rhamnonate + H2O. Catalyzes the dehydration of L-rhamnonate to 2-keto-3-deoxy-L-rhamnonate (KDR). The sequence is that of L-rhamnonate dehydratase from Salmonella paratyphi C (strain RKS4594).